The chain runs to 171 residues: NADH-quinone oxidoreductase subunit I 1 (171 aa).

4Fe-4S ferredoxin-type domains follow at residues 41–71 (LSRDPDGEERCVACYLCAAACPVDCIALQAT) and 81–110 (EFFRINFSRCIFCGFCEEACPTDAIQLTPD). Cys-51, Cys-54, Cys-57, Cys-61, Cys-90, Cys-93, Cys-96, and Cys-100 together coordinate [4Fe-4S] cluster.

This sequence belongs to the complex I 23 kDa subunit family. In terms of assembly, NDH-1 is composed of 14 different subunits. Subunits NuoA, H, J, K, L, M, N constitute the membrane sector of the complex. [4Fe-4S] cluster is required as a cofactor.

The protein localises to the cell inner membrane. The enzyme catalyses a quinone + NADH + 5 H(+)(in) = a quinol + NAD(+) + 4 H(+)(out). Functionally, NDH-1 shuttles electrons from NADH, via FMN and iron-sulfur (Fe-S) centers, to quinones in the respiratory chain. The immediate electron acceptor for the enzyme in this species is believed to be ubiquinone. Couples the redox reaction to proton translocation (for every two electrons transferred, four hydrogen ions are translocated across the cytoplasmic membrane), and thus conserves the redox energy in a proton gradient. This Nitrosospira multiformis (strain ATCC 25196 / NCIMB 11849 / C 71) protein is NADH-quinone oxidoreductase subunit I 1.